Reading from the N-terminus, the 188-residue chain is dCTP deaminase (188 aa).

Residues 111 to 116 (KSTYAR), 135 to 137 (TLE), Q156, Y170, and Q180 each bind dCTP. Catalysis depends on E137, which acts as the Proton donor/acceptor.

Belongs to the dCTP deaminase family. In terms of assembly, homotrimer.

The enzyme catalyses dCTP + H2O + H(+) = dUTP + NH4(+). It functions in the pathway pyrimidine metabolism; dUMP biosynthesis; dUMP from dCTP (dUTP route): step 1/2. Catalyzes the deamination of dCTP to dUTP. This Azoarcus sp. (strain BH72) protein is dCTP deaminase.